Reading from the N-terminus, the 412-residue chain is ATP phosphoribosyltransferase regulatory subunit (412 aa).

The protein belongs to the class-II aminoacyl-tRNA synthetase family. HisZ subfamily. Heteromultimer composed of HisG and HisZ subunits.

The protein resides in the cytoplasm. The protein operates within amino-acid biosynthesis; L-histidine biosynthesis; L-histidine from 5-phospho-alpha-D-ribose 1-diphosphate: step 1/9. Functionally, required for the first step of histidine biosynthesis. May allow the feedback regulation of ATP phosphoribosyltransferase activity by histidine. This Dehalococcoides mccartyi (strain ATCC BAA-2266 / KCTC 15142 / 195) (Dehalococcoides ethenogenes (strain 195)) protein is ATP phosphoribosyltransferase regulatory subunit.